The chain runs to 114 residues: FK506-binding protein 1 (114 aa).

One can recognise a PPIase FKBP-type domain in the interval 26–114 (GDLVTIHYTG…IFEVELLKVN (89 aa)).

It belongs to the FKBP-type PPIase family. FKBP1 subfamily.

The protein resides in the cytoplasm. It catalyses the reaction [protein]-peptidylproline (omega=180) = [protein]-peptidylproline (omega=0). With respect to regulation, inhibited by both FK506 and rapamycin. Functionally, PPIases accelerate the folding of proteins. It catalyzes the cis-trans isomerization of proline imidic peptide bonds in oligopeptides. This Eremothecium gossypii (strain ATCC 10895 / CBS 109.51 / FGSC 9923 / NRRL Y-1056) (Yeast) protein is FK506-binding protein 1 (FPR1).